The chain runs to 1745 residues: Collagen alpha-3(V) chain (1745 aa).

The signal sequence occupies residues 1–29 (MGNRRDLGQPRAGLCLLLAALQLLPGTQA). The Laminin G-like domain maps to 62–224 (DRAFRIGQAS…QACERYLPDC (163 aa)). N-linked (GlcNAc...) asparagine glycosylation is found at Asn-102 and Asn-141. The nonhelical region stretch occupies residues 211 to 391 (QAAFQACERY…AVIEKGQQFE (181 aa)). Disordered stretches follow at residues 230-304 (AATV…TPTP), 322-362 (RSLD…EYPS), 387-439 (GQQF…RGPP), and 476-1492 (SMKG…PAEL). Residues 244 to 267 (PRRKGKGKGRKKGRGRKGKGRKKN) show a composition bias toward basic residues. O-linked (Xyl...) (chondroitin sulfate) serine glycosylation is present at Ser-349. 2 Collagen-like domains span residues 391–440 (EGPP…GPPG) and 482–538 (GPVG…DGAR). Residues 392–1489 (GPPGAPGPQG…AGPPGPPGAP (1098 aa)) form a triple-helical region region. The segment covering 406–424 (SGPPGPPGFPGDPGPPGPA) has biased composition (pro residues). Low complexity-rich tracts occupy residues 426–439 (LPGI…RGPP), 489–499 (RPGPVGLPGHP), and 597–619 (EPGP…PGVT). Residues 724 to 733 (QGEKGEKGED) are compositionally biased toward basic and acidic residues. The span at 765-792 (PKGQAGQAGEEGPPGSAGEKGKLGVPGL) shows a compositional bias: low complexity. Collagen-like domains follow at residues 824–877 (GQPG…QGPP), 905–950 (GFQG…GLPG), and 951–989 (LEGR…GDPG). Low complexity predominate over residues 967-979 (LGKEGPAGLRGFP). Residues 1016 to 1025 (GPAGGIGLPG) show a composition bias toward gly residues. Composition is skewed to low complexity over residues 1116–1126 (ADGAQGRRGPP) and 1141–1152 (VGVIGPPGLQGL). Gly residues predominate over residues 1190–1199 (GLPGGVGQPG). Residues 1213–1222 (PGPPGAPGIP) are compositionally biased toward pro residues. A compositionally biased stretch (low complexity) spans 1234-1243 (SGPSGAAGPP). A compositionally biased stretch (basic and acidic residues) spans 1318 to 1330 (MGREGREGEKGAK). Low complexity predominate over residues 1405 to 1416 (IGLIGLIGPPGE). Positions 1429-1443 (QGPPGPKGDPGPPGP) are enriched in pro residues. Residues 1430–1488 (GPPGPKGDPGPPGPIGSLGHPGPPGVAGPLGQKGSKGSPGSMGPRGDTGPAGPPGPPGA) enclose the Collagen-like 6 domain. Over residues 1458–1479 (PLGQKGSKGSPGSMGPRGDTGP) the composition is skewed to low complexity. The Fibrillar collagen NC1 domain maps to 1514–1744 (EEVLASLTSL…GFELGPVCFS (231 aa)). Intrachain disulfides connect Cys-1585/Cys-1742 and Cys-1651/Cys-1696.

It belongs to the fibrillar collagen family. As to quaternary structure, trimers of two alpha 1(V) and one alpha 2(V) chains in most tissues and trimers of one alpha 1(V), one alpha 2(V), and one alpha 3(V) chains in placenta. Prolines at the third position of the tripeptide repeating unit (G-X-Y) are hydroxylated in some or all of the chains. In terms of tissue distribution, detected in fibroblasts (at protein level). Detected in urine (at protein level).

It localises to the secreted. The protein localises to the extracellular space. Its subcellular location is the extracellular matrix. In terms of biological role, type V collagen is a member of group I collagen (fibrillar forming collagen). It is a minor connective tissue component of nearly ubiquitous distribution. Type V collagen binds to DNA, heparan sulfate, thrombospondin, heparin, and insulin. This Homo sapiens (Human) protein is Collagen alpha-3(V) chain (COL5A3).